Consider the following 383-residue polypeptide: MKSIVYEKKLPKLTALEIAKNSKKKVICGMSGGVDSSVSAFILQQQGYQVEGLFMKNWEEDDDTDYCTAANDLADAQAVCDKLGIKLHKINFAAEYWDNVFEHFLAEYKAGRTPNPDILCNKEIKFKAFLEYAVEDLGADYIATGHYVRRSDVNGQTKLLRGLDSNKDQSYFLYTLSKDQVAQSLFPVGEIEKPIVRAIAGDLGLITAEKKDSTGICFIGERKFKDFLERFLPAQPGEIRMVDGKVIGKHDGLMYYTLGQRKGLGIGGVKGLSEDPFYVVDKDLINNVLVVAQGNDNSALLSQGLMATQLYWIDRLPIRQNLRCTVKTRYRQKDVACEVIPINDDCIEVRFDEPQIAVTPGQSAVFYQGEVCLGGGVIERQIK.

ATP-binding positions include 29-36 and Met-55; that span reads GMSGGVDS. The interval 115–117 is interaction with target base in tRNA; sequence NPD. Cys-120 acts as the Nucleophile in catalysis. A disulfide bridge links Cys-120 with Cys-217. Residue Gly-145 participates in ATP binding. The interaction with tRNA stretch occupies residues 167-169; that stretch reads KDQ. Cys-217 functions as the Cysteine persulfide intermediate in the catalytic mechanism. Residues 329–330 form an interaction with tRNA region; it reads RY.

The protein belongs to the MnmA/TRMU family.

It localises to the cytoplasm. It carries out the reaction S-sulfanyl-L-cysteinyl-[protein] + uridine(34) in tRNA + AH2 + ATP = 2-thiouridine(34) in tRNA + L-cysteinyl-[protein] + A + AMP + diphosphate + H(+). In terms of biological role, catalyzes the 2-thiolation of uridine at the wobble position (U34) of tRNA, leading to the formation of s(2)U34. In Histophilus somni (strain 2336) (Haemophilus somnus), this protein is tRNA-specific 2-thiouridylase MnmA.